Reading from the N-terminus, the 327-residue chain is MAVSDNTFSMSTMFNALPNPTETSGYIPPSGFAPRASATPLHAALFNLMTDGDGVSYFKEMISKSDKTELQRMASLLTSDSDYFMSIVTTKFGSRRVQKLLGKSDDVDAFFCAAILRRFLHITTDKYASYVTIRAMVVFDKVMKKALYERILYHALDLACDQHGCIALNDIITDADDPYYRDQLLELVVSNALRLSNDASGNFVVQHVLTLYDSRCIHNIAVNLYGQCIELSFKKYGSYIVEKLLEVEESMVVVVVELLGCDGDRLMRLARNEFGNFVVVKALRFTKEMRMDLFWGLVQKLMPFIHLLRRSHGNNIANILDTFRLRC.

Residues 1-324 (MAVSDNTFSM…NIANILDTFR (324 aa)) enclose the PUM-HD domain. Pumilio repeat units lie at residues 79-114 (SDSDYFMSIVTTKFGSRRVQKLLGKSDDVDAFFCAA), 115-149 (ILRRFLHITTDKYASYVTIRAMVVFDKVMKKALYE), 150-185 (RILYHALDLACDQHGCIALNDIITDADDPYYRDQLL), 186-222 (ELVVSNALRLSNDASGNFVVQHVLTLYDSRCIHNIAV), 223-260 (NLYGQCIELSFKKYGSYIVEKLLEVEESMVVVVVELLG), and 261-295 (CDGDRLMRLARNEFGNFVVVKALRFTKEMRMDLFW).

It is found in the cytoplasm. Its function is as follows. Sequence-specific RNA-binding protein that regulates translation and mRNA stability by binding the 3'-UTR of target mRNAs. In Arabidopsis thaliana (Mouse-ear cress), this protein is Putative pumilio homolog 19 (APUM19).